Reading from the N-terminus, the 334-residue chain is MTKPIVFSGAQPSGELTIGNYMGALRQWVNMQDDYHCIYCIVDQHAITVRQDAQQLRKATLDTLALYLACGIDPEKSTIFVQSHVPEHAQLGWALNCYTYFGELSRMTQFKDKSARYAENINAGLFDYPVLMAADILLYQTNLVPVGEDQKQHLELSRDIAQRFNGLYGDIFKVPEPFIPKSGARVMSLLEPTKKMSKSDDNRNNVIGLLEDPKSVVKKIKRAVTDSDEPPVVRYDVKEKAGVSNLLDILSAVTGQSIPELEKQFEGKMYGHLKGEVAEAVSGMLSELQERYHRFRNDEAFLQKVMKDGAEKASARAAETLKAVYEAIGFVAKP.

Residues 11-13 (QPS) and 19-20 (GN) each bind ATP. The 'HIGH' region signature appears at 12-20 (PSGELTIGN). L-tryptophan is bound at residue Asp135. ATP is bound by residues 147-149 (GED), Val186, and 195-199 (KMSKS). Positions 195 to 199 (KMSKS) match the 'KMSKS' region motif.

This sequence belongs to the class-I aminoacyl-tRNA synthetase family. In terms of assembly, homodimer.

It is found in the cytoplasm. It carries out the reaction tRNA(Trp) + L-tryptophan + ATP = L-tryptophyl-tRNA(Trp) + AMP + diphosphate + H(+). Its function is as follows. Catalyzes the attachment of tryptophan to tRNA(Trp). The chain is Tryptophan--tRNA ligase from Salmonella typhi.